Here is a 309-residue protein sequence, read N- to C-terminus: Taste receptor type 2 member 31 (309 aa).

At 1–2 the chain is on the extracellular side; it reads MT. A helical membrane pass occupies residues 3-23; the sequence is TFIPIIFSSLVVVIFVIGNFA. Residues 24-55 are Cytoplasmic-facing; sequence NGFIALVNSIEWFKRQKISFADQILTALAVSR. Residues 56-76 traverse the membrane as a helical segment; that stretch reads VGLLWVLLLNWYSTVLNPAFY. The Extracellular portion of the chain corresponds to 77 to 100; it reads SVEVRTTAYNVWAVTGHFSNWLAT. Residues 101-121 traverse the membrane as a helical segment; sequence SLSIFYLLKIANFSNLIFLHL. The Cytoplasmic segment spans residues 122–126; it reads KRRVK. Residues 127–147 traverse the membrane as a helical segment; the sequence is SVILVMLLGPLLFLACQLFMI. Topologically, residues 148–181 are extracellular; that stretch reads NMKEIVRTKEYEGNMTWKIKLRSAVYLSDATVTT. N-linked (GlcNAc...) asparagine glycosylation occurs at Asn-161. The chain crosses the membrane as a helical span at residues 182–202; that stretch reads LGNLVPFTLTLLCFLLLICSL. The Cytoplasmic segment spans residues 203–229; it reads CKHLKKMQLHGKGSQDPSTKVHIKVLQ. Residues 230 to 250 form a helical membrane-spanning segment; it reads TVISFLLLCAIYFLSIMISVW. The Extracellular segment spans residues 251–259; sequence SFGSLKNKP. The chain crosses the membrane as a helical span at residues 260–280; the sequence is VFMFCKAMRFSYPSIHPFILI. Topologically, residues 281–309 are cytoplasmic; it reads WGNKKLKQTFLSVLRQVRYWVKGEKPSSP.

It belongs to the G-protein coupled receptor T2R family.

The protein resides in the membrane. Receptor that may play a role in the perception of bitterness and is gustducin-linked. May play a role in sensing the chemical composition of the gastrointestinal content. The activity of this receptor may stimulate alpha gustducin, mediate PLC-beta-2 activation and lead to the gating of TRPM5. The protein is Taste receptor type 2 member 31 (TAS2R31) of Pan troglodytes (Chimpanzee).